Reading from the N-terminus, the 335-residue chain is Probable UDP-N-acetylglucosamine pyrophosphorylase (335 aa).

The Substrate binding motif lies at 45–48; the sequence is LSGG. UTP contacts are provided by residues 45-48, K59, Q120, and G145; that span reads LSGG. Position 146 (N146) interacts with substrate. Residue D170 coordinates UTP. The Substrate binding motif lies at 218 to 219; the sequence is EY. Residue K278 coordinates UTP. K308 is a substrate binding site.

It belongs to the UDPGP type 1 family.

It is found in the cytoplasm. It catalyses the reaction N-acetyl-alpha-D-glucosamine 1-phosphate + UTP + H(+) = UDP-N-acetyl-alpha-D-glucosamine + diphosphate. It functions in the pathway nucleotide-sugar biosynthesis; UDP-N-acetyl-alpha-D-glucosamine biosynthesis; UDP-N-acetyl-alpha-D-glucosamine from N-acetyl-alpha-D-glucosamine 1-phosphate: step 1/1. The polypeptide is Probable UDP-N-acetylglucosamine pyrophosphorylase (UAP1) (Encephalitozoon cuniculi (strain GB-M1) (Microsporidian parasite)).